Consider the following 613-residue polypeptide: Proton myo-inositol cotransporter hmit-1.2 (613 aa).

Topologically, residues 1 to 21 are cytoplasmic; that stretch reads MVAVEFKVSESGRPRPEKNPK. The helical transmembrane segment at 22-42 threads the bilayer; it reads LGFFVYLLGSAAIIGGFLFGY. At 43 to 69 the chain is on the extracellular side; the sequence is DTSVVSAAMLYVPEAPGLKPMGTVWKE. Residues 70–90 form a helical membrane-spanning segment; it reads VIVSITPGMAAVGAWFSGAGS. Topologically, residues 91–96 are cytoplasmic; that stretch reads DRYGRK. The helical transmembrane segment at 97 to 117 threads the bilayer; it reads PIIIGSTLIFVCGAVICAVAW. Residues 118 to 119 lie on the Extracellular side of the membrane; it reads TK. A helical transmembrane segment spans residues 120 to 140; it reads IVMLIGRIFLGVGIGFASMVV. Residues 141-157 are Cytoplasmic-facing; the sequence is PVYLGEASPTHVRGTLV. Residues 158 to 178 traverse the membrane as a helical segment; that stretch reads SAFAMMISFGQVVANIMGGVF. Residues 179-189 lie on the Extracellular side of the membrane; that stretch reads SYWEPYTIGWR. The helical transmembrane segment at 190–210 threads the bilayer; that stretch reads LMFAFAGIPALIQFVCFIFLP. Topologically, residues 211–279 are cytoplasmic; that stretch reads ETPRWLYENG…RILKTPHVLK (69 aa). Residues 280–300 traverse the membrane as a helical segment; the sequence is ACFIGSMLQAFQQLAGINTIL. At 301–317 the chain is on the extracellular side; the sequence is YYTADIIRSAGIENYHT. A helical membrane pass occupies residues 318-338; that stretch reads IIWISVILSICNLIGPFAPMF. The Cytoplasmic portion of the chain corresponds to 339–347; sequence FIEKLGRRK. The helical transmembrane segment at 348 to 368 threads the bilayer; sequence LFLFSCAGVVVSLVLIGVSFL. Residues 369 to 472 lie on the Extracellular side of the membrane; that stretch reads LVGNDSAPNF…QKHHCTTSYT (104 aa). Asparagine 372, asparagine 451, and asparagine 456 each carry an N-linked (GlcNAc...) asparagine glycan. The chain crosses the membrane as a helical span at residues 473-493; it reads ILPIVMMGVYLLTFSCGFTSL. Topologically, residues 494–515 are cytoplasmic; that stretch reads PWVLNSEFYPMWARSTCVSIST. A helical transmembrane segment spans residues 516–536; that stretch reads LSNWVFNLIIALTYLSLTHAI. Residues 537 to 539 are Extracellular-facing; sequence TKY. Residues 540–560 form a helical membrane-spanning segment; the sequence is GAFWLYAIFTIIAFIFIYFLV. Over 561 to 613 the chain is Cytoplasmic; sequence PETTGYSIDEVEMLFMNKRQRNIAMQARQAKLDAASDKDKNSSTSLSTETITM. Residues 594-613 are disordered; sequence AASDKDKNSSTSLSTETITM. The span at 602-613 shows a compositional bias: polar residues; the sequence is SSTSLSTETITM.

The protein belongs to the major facilitator superfamily. Sugar transporter (TC 2.A.1.1) family. Expressed in the excretory canal cell and in pairs of amphid and sheath glia.

It localises to the cell membrane. Its subcellular location is the perikaryon. The enzyme catalyses myo-inositol(out) + H(+)(out) = myo-inositol(in) + H(+)(in). H(+)-myo-inositol cotransporter. Probably by promoting the transport of myo-inositol regulates intracellular osmosis in response to hyperosmotic stress. This Caenorhabditis elegans protein is Proton myo-inositol cotransporter hmit-1.2.